A 260-amino-acid chain; its full sequence is Carbonic anhydrase 2 (260 aa).

N-acetylserine is present on Ser2. The residue at position 2 (Ser2) is a Phosphoserine. An Alpha-carbonic anhydrase domain is found at 3 to 259 (HHWGYGEHNG…LKNRQVRVFP (257 aa)). His64 (proton donor/acceptor) is an active-site residue. His94, His96, and His119 together coordinate Zn(2+). Phosphoserine occurs at positions 165 and 172. 198–199 (TN) serves as a coordination point for substrate.

The protein belongs to the alpha-carbonic anhydrase family. As to quaternary structure, interacts with SLC4A4 and SLC26A6. Interaction with SLC4A7 regulates SLC4A7 transporter activity. Zn(2+) serves as cofactor.

It localises to the cytoplasm. Its subcellular location is the cell membrane. The catalysed reaction is hydrogencarbonate + H(+) = CO2 + H2O. It carries out the reaction urea = cyanamide + H2O. Inhibited by acetazolamide. Its function is as follows. Catalyzes the reversible hydration of carbon dioxide. Can also hydrate cyanamide to urea. Involved in the regulation of fluid secretion into the anterior chamber of the eye. Essential for bone resorption and osteoclast differentiation. Contributes to intracellular pH regulation in the duodenal upper villous epithelium during proton-coupled peptide absorption. Stimulates the chloride-bicarbonate exchange activity of SLC26A6. The protein is Carbonic anhydrase 2 (CA2) of Ovis aries (Sheep).